A 181-amino-acid chain; its full sequence is Oligoribonuclease (181 aa).

The Exonuclease domain maps to 8 to 171 (LIWIDLEMTG…DDIRESVAEL (164 aa)). Residue tyrosine 129 is part of the active site.

It belongs to the oligoribonuclease family. As to quaternary structure, homodimer.

The protein localises to the cytoplasm. Functionally, 3'-to-5' exoribonuclease specific for small oligoribonucleotides. This Escherichia coli O139:H28 (strain E24377A / ETEC) protein is Oligoribonuclease.